A 714-amino-acid chain; its full sequence is Neutral ceramidase A (714 aa).

Residues 1–23 form the signal peptide; it reads MKRSIVFIYSLVILLLSVGFIDA. Residues asparagine 218 and asparagine 246 are each glycosylated (N-linked (GlcNAc...) asparagine). Serine 293 acts as the Nucleophile in catalysis. Asparagine 353, asparagine 373, asparagine 416, asparagine 571, asparagine 610, and asparagine 700 each carry an N-linked (GlcNAc...) asparagine glycan.

This sequence belongs to the neutral ceramidase family.

The protein localises to the secreted. The enzyme catalyses an N-acylsphing-4-enine + H2O = sphing-4-enine + a fatty acid. Functionally, hydrolyzes the sphingolipid ceramide into sphingosine and free fatty acid at an optimal pH of 3.0. Has no activity toward glycosphingolipids, such as GalCer and Galbeta1-3GalNAcbeta1-4(NeuAcalpha2-3)Galbeta1-4Glcbeta1-1'Cer or sphingomyelin. This Dictyostelium discoideum (Social amoeba) protein is Neutral ceramidase A (dcd2A).